The chain runs to 103 residues: Small ribosomal subunit protein uS10 (103 aa).

It belongs to the universal ribosomal protein uS10 family. As to quaternary structure, part of the 30S ribosomal subunit.

In terms of biological role, involved in the binding of tRNA to the ribosomes. The polypeptide is Small ribosomal subunit protein uS10 (Vibrio campbellii (strain ATCC BAA-1116)).